The primary structure comprises 183 residues: Probable actin-related protein 2/3 complex subunit 3 (183 aa).

The protein belongs to the ARPC3 family. Component of the Arp2/3 complex.

It is found in the cytoplasm. It localises to the cytoskeleton. Functions as a component of the Arp2/3 complex which is involved in regulation of actin polymerization and together with an activating nucleation-promoting factor (NPF) mediates the formation of branched actin networks. The polypeptide is Probable actin-related protein 2/3 complex subunit 3 (arx-5) (Caenorhabditis elegans).